A 91-amino-acid chain; its full sequence is UPF0213 protein NGO_1598 (91 aa).

The GIY-YIG domain occupies 4–83 (SNWSVYLILC…AAQKRQLWEQ (80 aa)).

This sequence belongs to the UPF0213 family.

The sequence is that of UPF0213 protein NGO_1598 from Neisseria gonorrhoeae (strain ATCC 700825 / FA 1090).